Here is a 62-residue protein sequence, read N- to C-terminus: Photosystem II reaction center protein Z (62 aa).

2 helical membrane passes run 8-28 (ALLALIFVSFALVVGVPVVFA) and 41-61 (FSGLSLWLLLVFVVGILNSFV).

Belongs to the PsbZ family. As to quaternary structure, PSII is composed of 1 copy each of membrane proteins PsbA, PsbB, PsbC, PsbD, PsbE, PsbF, PsbH, PsbI, PsbJ, PsbK, PsbL, PsbM, PsbT, PsbY, PsbZ, Psb30/Ycf12, at least 3 peripheral proteins of the oxygen-evolving complex and a large number of cofactors. It forms dimeric complexes.

It localises to the plastid. The protein localises to the chloroplast thylakoid membrane. Controls the interaction of photosystem II (PSII) cores with the light-harvesting antenna, aiding in the dissipation of excitation energy within PSII. PSII is a light-driven water plastoquinone oxidoreductase, using light energy to abstract electrons from H(2)O, generating a proton gradient subsequently used for ATP formation. In Chlamydomonas reinhardtii (Chlamydomonas smithii), this protein is Photosystem II reaction center protein Z.